The chain runs to 269 residues: Type 4 prepilin-like proteins leader peptide-processing enzyme (269 aa).

A run of 7 helical transmembrane segments spans residues 13–33 (MPVL…VVIW), 102–122 (YPLV…VWPE), 124–144 (GWAL…VIDL), 147–167 (QWLP…AAWA), 178–198 (VTGV…AGIV), 210–230 (LLFA…VALI), and 249–269 (LPFG…QALF).

The protein belongs to the peptidase A24 family.

The protein localises to the cell inner membrane. The catalysed reaction is Typically cleaves a -Gly-|-Phe- bond to release an N-terminal, basic peptide of 5-8 residues from type IV prepilin, and then N-methylates the new N-terminal amino group, the methyl donor being S-adenosyl-L-methionine.. Cleaves type-4 fimbrial leader sequence and methylates the N-terminal (generally Phe) residue. In Escherichia coli O78:H11 (strain H10407 / ETEC), this protein is Type 4 prepilin-like proteins leader peptide-processing enzyme.